Consider the following 197-residue polypeptide: Imidazoleglycerol-phosphate dehydratase (197 aa).

The protein belongs to the imidazoleglycerol-phosphate dehydratase family.

It localises to the cytoplasm. It carries out the reaction D-erythro-1-(imidazol-4-yl)glycerol 3-phosphate = 3-(imidazol-4-yl)-2-oxopropyl phosphate + H2O. The protein operates within amino-acid biosynthesis; L-histidine biosynthesis; L-histidine from 5-phospho-alpha-D-ribose 1-diphosphate: step 6/9. The sequence is that of Imidazoleglycerol-phosphate dehydratase from Rhodopseudomonas palustris (strain HaA2).